We begin with the raw amino-acid sequence, 209 residues long: Ion-translocating oxidoreductase complex subunit G (209 aa).

Residues 9–29 (GLILAVFACVSTGLVALTYAL) traverse the membrane as a helical segment. An FMN phosphoryl threonine modification is found at threonine 175.

The protein belongs to the RnfG family. The complex is composed of six subunits: RnfA, RnfB, RnfC, RnfD, RnfE and RnfG. FMN is required as a cofactor.

The protein localises to the cell inner membrane. Its function is as follows. Part of a membrane-bound complex that couples electron transfer with translocation of ions across the membrane. The protein is Ion-translocating oxidoreductase complex subunit G of Vibrio cholerae serotype O1 (strain ATCC 39315 / El Tor Inaba N16961).